The chain runs to 551 residues: MASCSRTWLLPGMAPQATAQTVPRPLQSLKVFAGLPHRRRVLFSGVSSRTRRGRIRSVKDDSLHFDPSKIEAPPYSSYFDSTSGQLEPASGARASIPGQEYWPEGTASRVRAARAPAPVGESAGTPSFGKKPGSRRKGYKEQVASATAGRGTETSGDEGESVVAIEASSDETLEETKDSLDEYVVYEMPKEENLSEYEMDKMMGRPHPFVDPQKAMSVGEPKSSEELWWNWRRKSEENEMWSRWQRRRPDVDTVFAKAMAETGQIKIFGDHPTRTEAALAKARRHLFKEERLEAEQRRLEEIGPIAYYSEWVEAYKNKDTSREAVQKHFEETGEDENTQLITMFQHQTAGEFRIMMGTDVRIQRDPLAMRMREDQIKQIWGGDPVYPTINYVHDPDEVADYRGPEFHEPTPEVVPYLMEHGIMITKEELYARLNEEMEDINQDITYLPEVRDPMATAVDIGEHSYNEDSDDDEEDADKVVAQPESLEDDEDDGDDAEDAEGKVSRNWSVLKTTGQAENPKEKSKKDQLSLKEAIADSENLTDFLMDFEEDE.

The N-terminal 47 residues, 1–47 (MASCSRTWLLPGMAPQATAQTVPRPLQSLKVFAGLPHRRRVLFSGVS), are a transit peptide targeting the chloroplast. Disordered regions lie at residues 76-161 (SSYF…EGES) and 463-529 (HSYN…DQLS). Positions 109–119 (RVRAARAPAPV) are enriched in low complexity. Composition is skewed to acidic residues over residues 467 to 476 (EDSDDDEEDA) and 485 to 498 (SLED…DAED). Polar residues predominate over residues 505-516 (RNWSVLKTTGQA). Over residues 518-529 (NPKEKSKKDQLS) the composition is skewed to basic and acidic residues.

In terms of assembly, component of the plastid-encoded plastid RNA polymerase (PEP) complex.

The protein localises to the plastid. The protein resides in the chloroplast. Its function is as follows. Required for the activity of the plastid-encoded RNA polymerase (PEP) and full expression of genes transcribed by PEP. Required for the proper build-up and formation of the PEP-complex. Binds single-stranded (ss) DNA and RNA, but not double-stranded (ds) DNA. In Oryza sativa subsp. japonica (Rice), this protein is Protein PLASTID TRANSCRIPTIONALLY ACTIVE 12, chloroplastic.